The sequence spans 219 residues: Cytidylate kinase (219 aa).

10–18 (GPAAAGKST) contacts ATP.

The protein belongs to the cytidylate kinase family. Type 1 subfamily.

The protein localises to the cytoplasm. The enzyme catalyses CMP + ATP = CDP + ADP. The catalysed reaction is dCMP + ATP = dCDP + ADP. The sequence is that of Cytidylate kinase from Staphylococcus saprophyticus subsp. saprophyticus (strain ATCC 15305 / DSM 20229 / NCIMB 8711 / NCTC 7292 / S-41).